A 173-amino-acid chain; its full sequence is NADH-ubiquinone oxidoreductase chain 6 (173 aa).

Transmembrane regions (helical) follow at residues 24–44 (AMGL…GMFV), 47–67 (FWFS…LFIY), 81–101 (MKLF…SFFF), and 142–162 (LITL…VKIT).

This sequence belongs to the complex I subunit 6 family.

The protein resides in the mitochondrion membrane. The enzyme catalyses a ubiquinone + NADH + 5 H(+)(in) = a ubiquinol + NAD(+) + 4 H(+)(out). Functionally, core subunit of the mitochondrial membrane respiratory chain NADH dehydrogenase (Complex I) that is believed to belong to the minimal assembly required for catalysis. Complex I functions in the transfer of electrons from NADH to the respiratory chain. The immediate electron acceptor for the enzyme is believed to be ubiquinone. This is NADH-ubiquinone oxidoreductase chain 6 from Aedes aegypti (Yellowfever mosquito).